Reading from the N-terminus, the 145-residue chain is Antiholin-like protein LrgA (145 aa).

4 consecutive transmembrane segments (helical) span residues 10 to 30, 33 to 53, 72 to 92, and 96 to 116; these read PAHF…SKII, FMPI…VLLC, NIGL…GVIS, and FLII…TGYV.

Belongs to the CidA/LrgA family. LrgA subfamily.

The protein localises to the cell membrane. Inhibits the expression or activity of extracellular murein hydrolases by interacting, possibly with LrgB, with the holin-like proteins CidA and/or CidB. The LrgAB and CidAB proteins may affect the proton motive force of the membrane. May be involved in programmed cell death (PCD), possibly triggering PCD in response to antibiotics and environmental stresses. This Staphylococcus aureus (strain Mu3 / ATCC 700698) protein is Antiholin-like protein LrgA.